The chain runs to 218 residues: Uracil-DNA glycosylase (218 aa).

The Proton acceptor role is filled by Asp-59.

It belongs to the uracil-DNA glycosylase (UDG) superfamily. UNG family.

It localises to the cytoplasm. It carries out the reaction Hydrolyzes single-stranded DNA or mismatched double-stranded DNA and polynucleotides, releasing free uracil.. Its function is as follows. Excises uracil residues from the DNA which can arise as a result of misincorporation of dUMP residues by DNA polymerase or due to deamination of cytosine. This Staphylococcus aureus (strain MSSA476) protein is Uracil-DNA glycosylase.